The sequence spans 321 residues: Aspartate carbamoyltransferase catalytic subunit (321 aa).

Carbamoyl phosphate is bound by residues arginine 64 and threonine 65. Lysine 92 contributes to the L-aspartate binding site. 3 residues coordinate carbamoyl phosphate: arginine 114, histidine 142, and glutamine 145. The L-aspartate site is built by arginine 175 and arginine 229. Carbamoyl phosphate-binding residues include glycine 270 and proline 271.

It belongs to the aspartate/ornithine carbamoyltransferase superfamily. ATCase family. As to quaternary structure, heterododecamer (2C3:3R2) of six catalytic PyrB chains organized as two trimers (C3), and six regulatory PyrI chains organized as three dimers (R2).

It catalyses the reaction carbamoyl phosphate + L-aspartate = N-carbamoyl-L-aspartate + phosphate + H(+). Its pathway is pyrimidine metabolism; UMP biosynthesis via de novo pathway; (S)-dihydroorotate from bicarbonate: step 2/3. Functionally, catalyzes the condensation of carbamoyl phosphate and aspartate to form carbamoyl aspartate and inorganic phosphate, the committed step in the de novo pyrimidine nucleotide biosynthesis pathway. The sequence is that of Aspartate carbamoyltransferase catalytic subunit from Azorhizobium caulinodans (strain ATCC 43989 / DSM 5975 / JCM 20966 / LMG 6465 / NBRC 14845 / NCIMB 13405 / ORS 571).